The sequence spans 238 residues: Ribosomal RNA small subunit methyltransferase G (238 aa).

S-adenosyl-L-methionine contacts are provided by residues glycine 77, phenylalanine 82, 128–129 (AE), and arginine 147. Residues 219 to 238 (RQTPKKYPRKAGLPNKEPIE) are disordered.

It belongs to the methyltransferase superfamily. RNA methyltransferase RsmG family.

It localises to the cytoplasm. Its function is as follows. Specifically methylates the N7 position of guanine in position 535 of 16S rRNA. In Oceanobacillus iheyensis (strain DSM 14371 / CIP 107618 / JCM 11309 / KCTC 3954 / HTE831), this protein is Ribosomal RNA small subunit methyltransferase G.